Here is a 188-residue protein sequence, read N- to C-terminus: MKQQANLIRAGQVIEHDGRRWTVLKQQIITPGKGGAFIQVEMRDLKTGNKTNERWRTADSVERLVTEDKDYTYSYMDGDNVVLMDPETFEQLILAKDIFGDQFAFLQDNMPLNVKLVEGDPVGVELPPHVTLEVTEADPVVKGQTASSSYKPAMLSNGVKTLVPPFIEAGERIVVRTEDGSYVERAKD.

It belongs to the elongation factor P family.

It localises to the cytoplasm. Its pathway is protein biosynthesis; polypeptide chain elongation. Its function is as follows. Involved in peptide bond synthesis. Stimulates efficient translation and peptide-bond synthesis on native or reconstituted 70S ribosomes in vitro. Probably functions indirectly by altering the affinity of the ribosome for aminoacyl-tRNA, thus increasing their reactivity as acceptors for peptidyl transferase. This Gluconobacter oxydans (strain 621H) (Gluconobacter suboxydans) protein is Elongation factor P.